The following is a 302-amino-acid chain: MVSQEQIEAIGGVLNNKDRPLKERFRALFTLKNIGGKTAIDAISKAFDDDSALLKHELAYCLGQMQDPTALEILTKVLKDTTQEPMVRHEAAEAMGAIGHADVLAILEEYKKDPVVEVAETCAIALDRVRWLQSGQQVADNNPYASVDPSPPTAGDKSVAELKAIYLDAKQTLFDRYRAMFSLRNLCTEESVLAIAEGLKDSSALFRHEVAFVLGQLQEPCSIPYLQENLEDHKENEMVRHECAEALGAIATDDCIQILTRYADDEKRVVKESCVIALDMCEYENSPEFQYADGLSKLDGTK.

HEAT-like PBS-type repeat units follow at residues 23–49 (ERFR…AFDD), 54–80 (LKHE…VLKD), 87–113 (VRHE…YKKD), 175–201 (DRYR…GLKD), 206–232 (FRHE…NLED), and 239–265 (VRHE…YADD). Fe cation contacts are provided by histidine 56, glutamate 57, histidine 89, and glutamate 90. Residues histidine 208, glutamate 209, histidine 241, and glutamate 242 each coordinate Fe cation.

Belongs to the deoxyhypusine hydroxylase family. Fe(2+) is required as a cofactor.

The protein resides in the endoplasmic reticulum membrane. The catalysed reaction is [eIF5A protein]-deoxyhypusine + AH2 + O2 = [eIF5A protein]-hypusine + A + H2O. Its pathway is protein modification; eIF5A hypusination. Catalyzes the hydroxylation of the N(6)-(4-aminobutyl)-L-lysine intermediate to form hypusine, an essential post-translational modification only found in mature eIF-5A factor. Essential for organismal viability and plays a role in a wide number of important processes such as cell growth and proliferation, and regulates induction of autophagy and protein synthesis. Has a role in eIF-5A-mediated translational control. The sequence is that of Deoxyhypusine hydroxylase from Drosophila pseudoobscura pseudoobscura (Fruit fly).